The sequence spans 201 residues: Large ribosomal subunit protein uL4 (201 aa).

Residues A39 to R67 form a disordered region.

It belongs to the universal ribosomal protein uL4 family. Part of the 50S ribosomal subunit.

Its function is as follows. One of the primary rRNA binding proteins, this protein initially binds near the 5'-end of the 23S rRNA. It is important during the early stages of 50S assembly. It makes multiple contacts with different domains of the 23S rRNA in the assembled 50S subunit and ribosome. Functionally, forms part of the polypeptide exit tunnel. This chain is Large ribosomal subunit protein uL4, found in Marinomonas sp. (strain MWYL1).